We begin with the raw amino-acid sequence, 222 residues long: Flagellar L-ring protein (222 aa).

Positions 1-18 (MKTTRAIAMLGLLLGLAA) are cleaved as a signal peptide. Cysteine 19 carries the N-palmitoyl cysteine lipid modification. Cysteine 19 is lipidated: S-diacylglycerol cysteine.

This sequence belongs to the FlgH family. The basal body constitutes a major portion of the flagellar organelle and consists of four rings (L,P,S, and M) mounted on a central rod.

Its subcellular location is the cell outer membrane. The protein localises to the bacterial flagellum basal body. Functionally, assembles around the rod to form the L-ring and probably protects the motor/basal body from shearing forces during rotation. The polypeptide is Flagellar L-ring protein (Thiobacillus denitrificans (strain ATCC 25259 / T1)).